We begin with the raw amino-acid sequence, 401 residues long: S-adenosylmethionine synthase (401 aa).

ATP is bound at residue 135 to 140; sequence GHGSGD.

Belongs to the AdoMet synthase 2 family. Mg(2+) serves as cofactor.

It catalyses the reaction L-methionine + ATP + H2O = S-adenosyl-L-methionine + phosphate + diphosphate. It functions in the pathway amino-acid biosynthesis; S-adenosyl-L-methionine biosynthesis; S-adenosyl-L-methionine from L-methionine: step 1/1. Its function is as follows. Catalyzes the formation of S-adenosylmethionine from methionine and ATP. The sequence is that of S-adenosylmethionine synthase (mat) from Methanothermobacter marburgensis (strain ATCC BAA-927 / DSM 2133 / JCM 14651 / NBRC 100331 / OCM 82 / Marburg) (Methanobacterium thermoautotrophicum).